An 840-amino-acid chain; its full sequence is Radial spoke head 10 homolog B (840 aa).

Basic and acidic residues-rich tracts occupy residues 1-16 (MVKE…DKSA) and 51-63 (QPKD…EVKS). The disordered stretch occupies residues 1–74 (MVKEKKKADK…SLPNEDTTQY (74 aa)). MORN repeat units lie at residues 86–108 (SYEG…QGGC), 109–131 (TYQG…ADGL), 132–154 (KYEG…PDGS), 155–177 (TYEG…STQP), 179–201 (SYIG…NQEG), 204–226 (WYEG…KSGN), 227–249 (IYEG…LTTN), 251–273 (EYTG…FLKR), 284–306 (EYVG…ASGA), and 307–329 (MYEG…KNGR). A coiled-coil region spans residues 758-801 (KEKVKENRLHNEAMALQRKMENEELEARLNSLREEEAKRQDYEV). The interval 810–840 (VDAPSSSFTPSPPKEDTVVSSKSITSKKKKK) is disordered.

Interacts with RSPH6A. Does not appear to be part of the axonemal radial spoke complexes 1 or 2.

The protein resides in the cytoplasm. Its subcellular location is the cytoskeleton. It is found in the cilium axoneme. The protein localises to the cell projection. It localises to the cilium. The protein resides in the flagellum. Its function is as follows. May function as part of the axonemal radial spoke complex 3 (RS3). Radial spoke complexes are important for ciliary motility. The polypeptide is Radial spoke head 10 homolog B (RSPH10B) (Bos taurus (Bovine)).